A 332-amino-acid polypeptide reads, in one-letter code: Beta-1,3-N-acetylglucosaminyltransferase radical fringe (332 aa).

At 1–6 (MSRARR) the chain is on the cytoplasmic side. A helical; Signal-anchor for type II membrane protein membrane pass occupies residues 7-29 (VLCRACLALAAVLAVLLLLPLPL). Residues 30 to 332 (PLPLPRAPAP…MKNRVEGAFQ (303 aa)) are Lumenal-facing. Arg75 serves as a coordination point for substrate. Residue Asn114 is glycosylated (N-linked (GlcNAc...) asparagine). 2 cysteine pairs are disulfide-bonded: Cys115–Cys126 and Cys144–Cys208. Asp148 contributes to the substrate binding site. Position 149 (Asp149) interacts with Mn(2+). Asp238 is a catalytic residue. His262 contacts Mn(2+). Cys312 and Cys321 are disulfide-bonded.

It belongs to the glycosyltransferase 31 family. Requires Mn(2+) as cofactor. In terms of tissue distribution, detected in all the examined tissues (12.5 dpc). High expression found in adult brain.

It localises to the golgi apparatus membrane. It catalyses the reaction 3-O-(alpha-L-fucosyl)-L-threonyl-[EGF-like domain protein] + UDP-N-acetyl-alpha-D-glucosamine = 3-O-(N-acetyl-beta-D-glucosaminyl-(1-&gt;3)-alpha-L-fucosyl)-L-threonyl-[EGF-like domain protein] + UDP + H(+). It carries out the reaction 3-O-(alpha-L-fucosyl)-L-seryl-[EGF-like domain protein] + UDP-N-acetyl-alpha-D-glucosamine = 3-O-(N-acetyl-beta-D-glucosaminyl-(1-&gt;3)-alpha-L-fucosyl)-L-seryl-[EGF-like domain protein] + UDP + H(+). Functionally, glycosyltransferase that initiates the elongation of O-linked fucose residues attached to EGF-like repeats in the extracellular domain of Notch molecules. Modulates NOTCH1 activity by modifying O-fucose residues at specific EGF-like domains resulting in enhancement of NOTCH1 activation by DLL1 and JAG1. May be involved in limb formation and in neurogenesis. The chain is Beta-1,3-N-acetylglucosaminyltransferase radical fringe from Mus musculus (Mouse).